The sequence spans 337 residues: tRNA N6-adenosine threonylcarbamoyltransferase (337 aa).

2 residues coordinate Fe cation: histidine 111 and histidine 115. Substrate is bound by residues 134 to 138 (LVSGG), aspartate 167, glycine 180, and asparagine 272. Aspartate 300 lines the Fe cation pocket.

This sequence belongs to the KAE1 / TsaD family. The cofactor is Fe(2+).

The protein localises to the cytoplasm. It carries out the reaction L-threonylcarbamoyladenylate + adenosine(37) in tRNA = N(6)-L-threonylcarbamoyladenosine(37) in tRNA + AMP + H(+). Its function is as follows. Required for the formation of a threonylcarbamoyl group on adenosine at position 37 (t(6)A37) in tRNAs that read codons beginning with adenine. Is involved in the transfer of the threonylcarbamoyl moiety of threonylcarbamoyl-AMP (TC-AMP) to the N6 group of A37, together with TsaE and TsaB. TsaD likely plays a direct catalytic role in this reaction. The chain is tRNA N6-adenosine threonylcarbamoyltransferase from Nitrosomonas europaea (strain ATCC 19718 / CIP 103999 / KCTC 2705 / NBRC 14298).